Consider the following 378-residue polypeptide: Mevalonate kinase (378 aa).

ATP is bound by residues Lys-10, Ser-138, and Gly-143 to Ser-149. 2 residues coordinate Mg(2+): Ser-149 and Glu-193. Asp-204 (proton acceptor) is an active-site residue.

The protein belongs to the GHMP kinase family. Mevalonate kinase subfamily. Mg(2+) is required as a cofactor.

It is found in the cytoplasm. It catalyses the reaction (R)-mevalonate + ATP = (R)-5-phosphomevalonate + ADP + H(+). It functions in the pathway isoprenoid biosynthesis; isopentenyl diphosphate biosynthesis via mevalonate pathway; isopentenyl diphosphate from (R)-mevalonate: step 1/3. Its activity is regulated as follows. Its activity is inhibited in vitro by geranyl pyrophosphate (GPP) and farnesyl pyrophosphate (FPP) that bind competitively at the ATP-binding site on the enzyme. Its function is as follows. Catalyzes the phosphorylation of mevalonate to mevalonate 5-phosphate, a key step in isoprenoid and cholesterol biosynthesis. This Arabidopsis thaliana (Mouse-ear cress) protein is Mevalonate kinase.